Consider the following 38-residue polypeptide: Large ribosomal subunit protein bL36 (38 aa).

The protein belongs to the bacterial ribosomal protein bL36 family.

In Prosthecochloris aestuarii (strain DSM 271 / SK 413), this protein is Large ribosomal subunit protein bL36.